The following is a 156-amino-acid chain: MNLNATLIGQLIAFAIFVAFCMKFVWPPIIKAIEERQRSIANALASAEAARKEQADTKALVEQEITEAKMQAQQIIDLANKRRNEILEEVKVEAEATKAKIIEQGYAEVEAERKRVQEELRVKVASLAIAGAEKIVGRTVDEAANSDIIDKLVAEL.

A helical transmembrane segment spans residues Leu7–Pro27.

This sequence belongs to the ATPase B chain family. F-type ATPases have 2 components, F(1) - the catalytic core - and F(0) - the membrane proton channel. F(1) has five subunits: alpha(3), beta(3), gamma(1), delta(1), epsilon(1). F(0) has three main subunits: a(1), b(2) and c(10-14). The alpha and beta chains form an alternating ring which encloses part of the gamma chain. F(1) is attached to F(0) by a central stalk formed by the gamma and epsilon chains, while a peripheral stalk is formed by the delta and b chains.

It is found in the cell inner membrane. F(1)F(0) ATP synthase produces ATP from ADP in the presence of a proton or sodium gradient. F-type ATPases consist of two structural domains, F(1) containing the extramembraneous catalytic core and F(0) containing the membrane proton channel, linked together by a central stalk and a peripheral stalk. During catalysis, ATP synthesis in the catalytic domain of F(1) is coupled via a rotary mechanism of the central stalk subunits to proton translocation. Functionally, component of the F(0) channel, it forms part of the peripheral stalk, linking F(1) to F(0). The sequence is that of ATP synthase subunit b from Pasteurella multocida (strain Pm70).